The following is a 418-amino-acid chain: Glutamyl-tRNA reductase (418 aa).

Residues 49–52 (TCNR), serine 109, 114–116 (EPQ), and glutamine 120 contribute to the substrate site. Cysteine 50 acts as the Nucleophile in catalysis. 189 to 194 (GAGETI) contributes to the NADP(+) binding site.

It belongs to the glutamyl-tRNA reductase family. As to quaternary structure, homodimer.

The enzyme catalyses (S)-4-amino-5-oxopentanoate + tRNA(Glu) + NADP(+) = L-glutamyl-tRNA(Glu) + NADPH + H(+). It participates in porphyrin-containing compound metabolism; protoporphyrin-IX biosynthesis; 5-aminolevulinate from L-glutamyl-tRNA(Glu): step 1/2. Functionally, catalyzes the NADPH-dependent reduction of glutamyl-tRNA(Glu) to glutamate 1-semialdehyde (GSA). The chain is Glutamyl-tRNA reductase from Escherichia coli O157:H7.